The following is a 225-amino-acid chain: RNA chaperone ProQ (225 aa).

The tract at residues 107 to 169 (KARVQAQRAA…VAAKAPREER (63 aa)) is disordered. The span at 109–118 (RVQAQRAAQQ) shows a compositional bias: low complexity. The span at 137-146 (RERKPRPQQP) shows a compositional bias: basic residues. Positions 147–156 (RRKEGAEQRK) are enriched in basic and acidic residues.

This sequence belongs to the ProQ family.

It is found in the cytoplasm. Functionally, RNA chaperone with significant RNA binding, RNA strand exchange and RNA duplexing activities. May regulate ProP activity through an RNA-based, post-transcriptional mechanism. This is RNA chaperone ProQ from Klebsiella pneumoniae subsp. pneumoniae (strain ATCC 700721 / MGH 78578).